The sequence spans 221 residues: Ribose-5-phosphate isomerase A (221 aa).

Residues 26-29 (TGST), 81-84 (DGAD), and 94-97 (KGGG) contribute to the substrate site. Residue Glu103 is the Proton acceptor of the active site. Lys121 provides a ligand contact to substrate.

It belongs to the ribose 5-phosphate isomerase family. Homodimer.

It carries out the reaction aldehydo-D-ribose 5-phosphate = D-ribulose 5-phosphate. It participates in carbohydrate degradation; pentose phosphate pathway; D-ribose 5-phosphate from D-ribulose 5-phosphate (non-oxidative stage): step 1/1. Its function is as follows. Catalyzes the reversible conversion of ribose-5-phosphate to ribulose 5-phosphate. The chain is Ribose-5-phosphate isomerase A from Bacillus mycoides (strain KBAB4) (Bacillus weihenstephanensis).